Here is a 273-residue protein sequence, read N- to C-terminus: Type III pantothenate kinase (273 aa).

5–12 lines the ATP pocket; that stretch reads DVGNSHVV. Substrate is bound at residue 112–115; the sequence is GTDL. Catalysis depends on aspartate 114, which acts as the Proton acceptor. Residue aspartate 134 participates in K(+) binding. Threonine 137 is a binding site for ATP. Threonine 189 is a substrate binding site.

This sequence belongs to the type III pantothenate kinase family. In terms of assembly, homodimer. It depends on NH4(+) as a cofactor. K(+) serves as cofactor.

It is found in the cytoplasm. The enzyme catalyses (R)-pantothenate + ATP = (R)-4'-phosphopantothenate + ADP + H(+). The protein operates within cofactor biosynthesis; coenzyme A biosynthesis; CoA from (R)-pantothenate: step 1/5. Its function is as follows. Catalyzes the phosphorylation of pantothenate (Pan), the first step in CoA biosynthesis. The protein is Type III pantothenate kinase of Treponema pallidum subsp. pallidum (strain SS14).